A 308-amino-acid chain; its full sequence is F420-non-reducing hydrogenase subunit G (308 aa).

This sequence belongs to the [NiFe]/[NiFeSe] hydrogenase small subunit family. In terms of assembly, the F420-non-reducing hydrogenase is composed of three subunits; MvhA, MvhD and MvhG. It forms a complex with the heterodisulfide reductase (hdr).

Part of a complex that provides reducing equivalents for heterodisulfide reductase. The protein is F420-non-reducing hydrogenase subunit G (mvhG) of Methanothermobacter marburgensis (strain ATCC BAA-927 / DSM 2133 / JCM 14651 / NBRC 100331 / OCM 82 / Marburg) (Methanobacterium thermoautotrophicum).